We begin with the raw amino-acid sequence, 454 residues long: tRNA modification GTPase MnmE (454 aa).

(6S)-5-formyl-5,6,7,8-tetrahydrofolate contacts are provided by Arg23, Glu80, and Lys120. Residues 216 to 377 (GMKVVIAGRP…LRNHLKQSMG (162 aa)) enclose the TrmE-type G domain. K(+) is bound at residue Asn226. Residues 226–231 (NAGKSS), 245–251 (TDIAGTT), 270–273 (DTAG), 335–338 (NKAD), and 358–360 (SAR) each bind GTP. Ser230 contacts Mg(2+). K(+) contacts are provided by Thr245, Ile247, and Thr250. Thr251 serves as a coordination point for Mg(2+). (6S)-5-formyl-5,6,7,8-tetrahydrofolate is bound at residue Lys454.

Belongs to the TRAFAC class TrmE-Era-EngA-EngB-Septin-like GTPase superfamily. TrmE GTPase family. Homodimer. Heterotetramer of two MnmE and two MnmG subunits. K(+) is required as a cofactor.

Its subcellular location is the cytoplasm. Exhibits a very high intrinsic GTPase hydrolysis rate. Involved in the addition of a carboxymethylaminomethyl (cmnm) group at the wobble position (U34) of certain tRNAs, forming tRNA-cmnm(5)s(2)U34. The polypeptide is tRNA modification GTPase MnmE (Citrobacter koseri (strain ATCC BAA-895 / CDC 4225-83 / SGSC4696)).